A 167-amino-acid polypeptide reads, in one-letter code: Lipoprotein signal peptidase (167 aa).

4 helical membrane-spanning segments follow: residues 8–28 (TFLT…VVLL), 46–66 (WGHF…FGLF), 68–88 (QYKI…ALFL), and 101–121 (VALT…LLYG). Residues Asp125 and Asp143 contribute to the active site. The helical transmembrane segment at 139–159 (FNLADAFISIGTLLLIGHLYF) threads the bilayer.

Belongs to the peptidase A8 family.

The protein localises to the cell inner membrane. It carries out the reaction Release of signal peptides from bacterial membrane prolipoproteins. Hydrolyzes -Xaa-Yaa-Zaa-|-(S,diacylglyceryl)Cys-, in which Xaa is hydrophobic (preferably Leu), and Yaa (Ala or Ser) and Zaa (Gly or Ala) have small, neutral side chains.. Its pathway is protein modification; lipoprotein biosynthesis (signal peptide cleavage). In terms of biological role, this protein specifically catalyzes the removal of signal peptides from prolipoproteins. This chain is Lipoprotein signal peptidase, found in Chlamydia trachomatis serovar A (strain ATCC VR-571B / DSM 19440 / HAR-13).